The sequence spans 90 residues: Probable Fe(2+)-trafficking protein (90 aa).

The protein belongs to the Fe(2+)-trafficking protein family.

Its function is as follows. Could be a mediator in iron transactions between iron acquisition and iron-requiring processes, such as synthesis and/or repair of Fe-S clusters in biosynthetic enzymes. This chain is Probable Fe(2+)-trafficking protein, found in Idiomarina loihiensis (strain ATCC BAA-735 / DSM 15497 / L2-TR).